The chain runs to 159 residues: Ethylene-responsive transcription factor ERF069 (159 aa).

Disordered stretches follow at residues 1-36 (MKRIVRISFTDMEATDSSSSEDESPPSSRRRGKKLV) and 128-159 (DAPTNFGRPDVDSAVVKKQDSDASGGASEEVV). Positions 74 to 134 (KFRGVRQRPW…IGPDAPTNFG (61 aa)) form a DNA-binding region, AP2/ERF. The segment covering 136-148 (PDVDSAVVKKQDS) has biased composition (basic and acidic residues).

It belongs to the AP2/ERF transcription factor family. ERF subfamily.

It localises to the nucleus. In terms of biological role, probably acts as a transcriptional activator. Binds to the GCC-box pathogenesis-related promoter element. May be involved in the regulation of gene expression by stress factors and by components of stress signal transduction pathways. This chain is Ethylene-responsive transcription factor ERF069 (ERF069), found in Arabidopsis thaliana (Mouse-ear cress).